A 34-amino-acid chain; its full sequence is TCRYLFGGCKTTADCCKHLACRSDGKYCAWDGTF.

Disulfide bonds link Cys-2–Cys-16, Cys-9–Cys-21, and Cys-15–Cys-28. Residues 4–6 form an involved in active face region; it reads YLF.

Belongs to the neurotoxin 10 (Hwtx-1) family. 09 (HaTx) subfamily. Expressed by the venom gland.

It is found in the secreted. Reversibly inhibits potassium currents in oocytes expressing Kv2.1/KCNB1 channels (Kd=2.7 uM). Acts by shifting activation of the channel to more depolarized voltages. The toxin may bind to the S3b-S4 helices of the voltage sensor paddle. One, two, three or four toxin molecules may bind the Kv2.1/KCNB1 channel. It shows low to moderate affinity for lipid bilayers. It partitions into the bilayer membrane, where it stabilizes at the water/membrane interface. The chain is Kappa-theraphotoxin-Scg1a from Stromatopelma calceatum griseipes (Feather leg baboon tarantula).